The sequence spans 95 residues: MEIRLINIGFGNIVSANRIVAIVSPESAPIKRMITEARDRGMLIDATYGRRTRAVIITDSDHVILSAVQPETVAHRLVSKMEQAHHHHHGDNGKD.

This sequence belongs to the RemA family.

The protein is Putative regulatory protein Daud_1598 of Desulforudis audaxviator (strain MP104C).